The primary structure comprises 580 residues: Arginine--tRNA ligase (580 aa).

The 'HIGH' region signature appears at 123–133; it reads PNIAKEMHVGH.

It belongs to the class-I aminoacyl-tRNA synthetase family. As to quaternary structure, monomer.

The protein resides in the cytoplasm. It carries out the reaction tRNA(Arg) + L-arginine + ATP = L-arginyl-tRNA(Arg) + AMP + diphosphate. The sequence is that of Arginine--tRNA ligase (argS) from Buchnera aphidicola subsp. Schizaphis graminum (strain Sg).